We begin with the raw amino-acid sequence, 44 residues long: MADKPDMAEIEKFDKSKLKKTETQEKNPLPSKETIEQEKQAGES.

A compositionally biased stretch (basic and acidic residues) spans 1 to 25; it reads MADKPDMAEIEKFDKSKLKKTETQE. Residues 1 to 44 form a disordered region; that stretch reads MADKPDMAEIEKFDKSKLKKTETQEKNPLPSKETIEQEKQAGES. An N-acetylalanine modification is found at A2. An N6-acetyllysine modification is found at K4. K12 carries the post-translational modification N6-acetyllysine; alternate. Residue K12 forms a Glycyl lysine isopeptide (Lys-Gly) (interchain with G-Cter in SUMO2); alternate linkage. The residue at position 23 (T23) is a Phosphothreonine. N6-acetyllysine is present on K26. Residue S31 is modified to Phosphoserine. At K32 the chain carries N6-acetyllysine. Basic and acidic residues predominate over residues 33 to 44; sequence ETIEQEKQAGES. T34 is modified (phosphothreonine). Residue K39 is modified to N6-acetyllysine.

This sequence belongs to the thymosin beta family. In terms of tissue distribution, originally found in thymus but it is widely distributed in many tissues.

It is found in the cytoplasm. It localises to the cytoskeleton. In terms of biological role, plays an important role in the organization of the cytoskeleton. Binds to and sequesters actin monomers (G actin) and therefore inhibits actin polymerization. Seraspenide inhibits the entry of hematopoietic pluripotent stem cells into the S-phase. The sequence is that of Thymosin beta-4 (TMSB4) from Oryctolagus cuniculus (Rabbit).